The chain runs to 152 residues: D-aminoacyl-tRNA deacylase (152 aa).

Residues 142-143 (GP) carry the Gly-cisPro motif, important for rejection of L-amino acids motif.

It belongs to the DTD family. Homodimer.

The protein resides in the cytoplasm. The catalysed reaction is glycyl-tRNA(Ala) + H2O = tRNA(Ala) + glycine + H(+). It catalyses the reaction a D-aminoacyl-tRNA + H2O = a tRNA + a D-alpha-amino acid + H(+). Its function is as follows. An aminoacyl-tRNA editing enzyme that deacylates mischarged D-aminoacyl-tRNAs. Also deacylates mischarged glycyl-tRNA(Ala), protecting cells against glycine mischarging by AlaRS. Acts via tRNA-based rather than protein-based catalysis; rejects L-amino acids rather than detecting D-amino acids in the active site. By recycling D-aminoacyl-tRNA to D-amino acids and free tRNA molecules, this enzyme counteracts the toxicity associated with the formation of D-aminoacyl-tRNA entities in vivo and helps enforce protein L-homochirality. The sequence is that of D-aminoacyl-tRNA deacylase from Paraburkholderia phymatum (strain DSM 17167 / CIP 108236 / LMG 21445 / STM815) (Burkholderia phymatum).